The following is a 665-amino-acid chain: Protein-arginine deiminase type-2 (665 aa).

Ca(2+)-binding residues include Asp123, Asp125, Asp127, Val129, Glu131, Asn154, Asp156, Glu158, Asp166, Asp169, Lys171, Asp177, Asp180, Glu354, Asp389, Phe408, Leu411, and Glu412. The active-site Nucleophile is the Cys647.

Belongs to the protein arginine deiminase family. Homodimer. Ca(2+) serves as cofactor. In terms of tissue distribution, detected in keratinocytes in epidermis (at protein level).

It localises to the cytoplasm. It catalyses the reaction L-arginyl-[protein] + H2O = L-citrullyl-[protein] + NH4(+). Functionally, catalyzes the deimination of arginine residues of proteins. The protein is Protein-arginine deiminase type-2 (PADI2) of Homo sapiens (Human).